We begin with the raw amino-acid sequence, 120 residues long: Cell division topological specificity factor (120 aa).

The segment at 93–120 is disordered; sequence LNSCEGENPQQDPGAAPSEGGHLSSPSP.

This sequence belongs to the MinE family.

Functionally, prevents the cell division inhibition by proteins MinC and MinD at internal division sites while permitting inhibition at polar sites. This ensures cell division at the proper site by restricting the formation of a division septum at the midpoint of the long axis of the cell. The sequence is that of Cell division topological specificity factor from Synechococcus sp. (strain JA-3-3Ab) (Cyanobacteria bacterium Yellowstone A-Prime).